Reading from the N-terminus, the 312-residue chain is Transcriptional regulator protein Pur-beta (312 aa).

The segment at 1 to 32 is disordered; the sequence is MADGDSGSERGGGGGPCGFQPASRGGGEQETQ. Residue alanine 2 is modified to N-acetylalanine. Phosphoserine is present on residues serine 6 and serine 8. Residue arginine 24 is modified to Omega-N-methylarginine. Residues 28-254 form a DNA-binding region; sequence EQETQELASK…LRVSEVKPSY (227 aa). At threonine 31 the chain carries Phosphothreonine. Serine 101 carries the post-translational modification Phosphoserine. Omega-N-methylarginine is present on arginine 152. Residue lysine 267 is modified to N6-acetyllysine. A compositionally biased stretch (basic and acidic residues) spans 284 to 295; the sequence is ERQRDKLYERRG. The segment at 284-312 is disordered; that stretch reads ERQRDKLYERRGGGSGGGEESEGEEVDED. An Omega-N-methylarginine modification is found at arginine 294. Phosphoserine is present on residues serine 298 and serine 304. Residues 302–312 are compositionally biased toward acidic residues; it reads EESEGEEVDED.

It belongs to the PUR DNA-binding protein family. In terms of assembly, homodimer, heterodimer with PURA and heterotrimer with PURA and YBX1/Y-box protein 1. Interacts with MYOCD and SRF. Expressed in myocardium of heart failure patients.

It is found in the nucleus. In terms of biological role, transcriptional regulator which can act as an activator or a repressor. Represses the transcription of ACTA2 in fibroblasts and smooth muscle cells via its ability to interact with the purine-rich strand of a MCAT- containing element in the 5' flanking region of the gene. Represses the transcription of MYOCD, capable of repressing all isoforms of MYOCD but the magnitude of the repressive effects is most notable for the SMC- specific isoforms. Promotes hepatic glucose production by activating the transcription of ADCY6, leading to cAMP accumulation, increased PKA activity, CREB activation, and increased transcription of PCK1 and G6PC genes. Has capacity to bind repeated elements in single-stranded DNA such as the purine-rich single strand of the PUR element located upstream of the MYC gene. Participates in transcriptional and translational regulation of alpha-MHC expression in cardiac myocytes by binding to the purine-rich negative regulatory (PNR) element Modulates constitutive liver galectin-3 gene transcription by binding to its promoter. May play a role in the dendritic transport of a subset of mRNAs. The sequence is that of Transcriptional regulator protein Pur-beta (PURB) from Homo sapiens (Human).